Reading from the N-terminus, the 55-residue chain is Large ribosomal subunit protein bL33 (55 aa).

The protein belongs to the bacterial ribosomal protein bL33 family.

The polypeptide is Large ribosomal subunit protein bL33 (Xanthobacter autotrophicus (strain ATCC BAA-1158 / Py2)).